Here is a 656-residue protein sequence, read N- to C-terminus: Mucin-20 (656 aa).

Residues 1–21 (MGSVWGLAVPLLVFCWKVGVS) form the signal peptide. Polar residues-rich tracts occupy residues 85 to 96 (ATSISSEVNSRD), 114 to 125 (PAASSLEAQTTS), and 159 to 170 (TTSPAPSFLDTQ). Disordered regions lie at residues 85–125 (ATSI…QTTS), 159–232 (TTSP…TQTI), and 329–348 (YLSS…LSSS). A compositionally biased stretch (low complexity) spans 171–227 (TTSPEPSSLTTSPAPSSLITSPTPSSLTTSPAPSFLDTQTTSPAPSSLTTSPAPSSL). Tandem repeats lie at residues 180–188 (TTSPAPSSL), 189–197 (ITSPTPSSL), 198–206 (TTSPAPSFL), 210–218 (TTSPAPSSL), and 219–227 (TTSPAPSSL). The interval 180–227 (TTSPAPSSLITSPTPSSLTTSPAPSFLDTQTTSPAPSSLTTSPAPSSL) is approximate repeats. 2 N-linked (GlcNAc...) asparagine glycosylation sites follow: Asn-366 and Asn-570. An involved in oligomerization region spans residues 399-603 (TAALFTSEIL…WIRKTTKHDP (205 aa)). Polar residues predominate over residues 560–573 (STTASTSKNPNITL). The tract at residues 560 to 592 (STTASTSKNPNITLTKTTASPKPPTHPTTSAST) is disordered. Residues 604 to 656 (GEDGGFLLVRLTVASPKDLTEHNAREKLMNQLRRELHARMPLVHMSFLSIRRG) form an interaction with MET region.

In terms of assembly, interacts with MET; oligomerization increases affinity for MET. Highly expressed in kidney. Up-regulated in renal tissues during renal injury.

It localises to the secreted. The protein resides in the apical cell membrane. Its subcellular location is the basolateral cell membrane. It is found in the cell projection. The protein localises to the microvillus membrane. Functionally, may regulate MET signaling cascade. Seems to decrease hepatocyte growth factor (HGF)-induced transient MAPK activation. Blocks GRB2 recruitment to MET thus suppressing the GRB2-RAS pathway. Inhibits HGF-induced proliferation of MMP1 and MMP9 expression. This Mus musculus (Mouse) protein is Mucin-20 (Muc20).